The following is a 199-amino-acid chain: Elongation factor Ts, chloroplastic (199 aa).

This sequence belongs to the EF-Ts family.

It localises to the plastid. It is found in the chloroplast. Its function is as follows. Associates with the EF-Tu.GDP complex and induces the exchange of GDP to GTP. It remains bound to the aminoacyl-tRNA.EF-Tu.GTP complex up to the GTP hydrolysis stage on the ribosome. The sequence is that of Elongation factor Ts, chloroplastic (tsf) from Galdieria sulphuraria (Red alga).